Reading from the N-terminus, the 299-residue chain is tRNA-cytidine(32) 2-sulfurtransferase (299 aa).

The PP-loop motif motif lies at 56–61 (SGGKDS). Positions 131, 134, and 222 each coordinate [4Fe-4S] cluster.

Belongs to the TtcA family. As to quaternary structure, homodimer. The cofactor is Mg(2+). It depends on [4Fe-4S] cluster as a cofactor.

The protein localises to the cytoplasm. It catalyses the reaction cytidine(32) in tRNA + S-sulfanyl-L-cysteinyl-[cysteine desulfurase] + AH2 + ATP = 2-thiocytidine(32) in tRNA + L-cysteinyl-[cysteine desulfurase] + A + AMP + diphosphate + H(+). It participates in tRNA modification. In terms of biological role, catalyzes the ATP-dependent 2-thiolation of cytidine in position 32 of tRNA, to form 2-thiocytidine (s(2)C32). The sulfur atoms are provided by the cysteine/cysteine desulfurase (IscS) system. In Xylella fastidiosa (strain M23), this protein is tRNA-cytidine(32) 2-sulfurtransferase.